Reading from the N-terminus, the 448-residue chain is Chaperone SurA (448 aa).

An N-terminal signal peptide occupies residues 1–27; the sequence is MKKTLRFAAVASGLVASLITVAPSASA. PpiC domains follow at residues 185 to 288 and 301 to 399; these read QQDL…RLVE and IVQT…QVLG.

The protein resides in the periplasm. It catalyses the reaction [protein]-peptidylproline (omega=180) = [protein]-peptidylproline (omega=0). Functionally, chaperone involved in the correct folding and assembly of outer membrane proteins. Recognizes specific patterns of aromatic residues and the orientation of their side chains, which are found more frequently in integral outer membrane proteins. May act in both early periplasmic and late outer membrane-associated steps of protein maturation. The protein is Chaperone SurA of Burkholderia pseudomallei (strain 1710b).